The following is a 414-amino-acid chain: Chaperone protein dnaJ 39 (414 aa).

A compositionally biased stretch (basic and acidic residues) spans 1–24 (MATHSSRSENKDAGEEDELRRRNP). The disordered stretch occupies residues 1-36 (MATHSSRSENKDAGEEDELRRRNPYEVLGIPSNSTD). The J domain maps to 23–88 (NPYEVLGIPS…ENRRLYDTTG (66 aa)). A coiled-coil region spans residues 296–324 (EKESLRSTEAQIVSKRTELLKFEAEYHEV). The interval 362 to 395 (TKQGSSKSRSWSKKKSSLLMEPREEGEVAVREEG) is disordered. Residues 382-395 (EPREEGEVAVREEG) show a composition bias toward basic and acidic residues.

It belongs to the DnaJ family. C/III subfamily. As to expression, expressed constitutively at low levels in seedlings, roots, leaves, stems, flowers and siliques.

The protein resides in the membrane. Plays a continuous role in plant development probably in the structural organization of compartments. Seems to be involved in early gravitropic signal transduction within the gravity-perceiving cells (statocytes). This chain is Chaperone protein dnaJ 39 (ATJ39), found in Arabidopsis thaliana (Mouse-ear cress).